The sequence spans 844 residues: Translation initiation factor IF-2 (844 aa).

Over residues 1 to 11 the composition is skewed to basic and acidic residues; sequence MTEDVKADAPK. 2 disordered regions span residues 1 to 48 and 79 to 249; these read MTED…VKTD and RLEA…GTAL. Over residues 21-30 the composition is skewed to low complexity; it reads TTVSSTTTGG. Basic and acidic residues predominate over residues 79–161; the sequence is RLEAEKAATK…AAEEAKRYAE (83 aa). Acidic residues predominate over residues 162 to 175; it reads ADDSDNESSSEDYS. The segment covering 200-210 has biased composition (basic residues); sequence RGKNKVAKAKK. Residues 211-237 are compositionally biased toward basic and acidic residues; sequence GGRDDENSKNSKNERESNRKNQKDAKF. Residues 343-513 enclose the tr-type G domain; it reads TRAPVVTIMG…LLQSEVLELT (171 aa). Residues 352-359 are G1; the sequence is GHVDHGKT. 352-359 provides a ligand contact to GTP; the sequence is GHVDHGKT. The segment at 377–381 is G2; it reads GITQH. The interval 399-402 is G3; sequence DTPG. GTP is bound by residues 399–403 and 453–456; these read DTPGH and NKID. The G4 stretch occupies residues 453 to 456; that stretch reads NKID. The interval 489–491 is G5; it reads SAK.

Belongs to the TRAFAC class translation factor GTPase superfamily. Classic translation factor GTPase family. IF-2 subfamily.

It is found in the cytoplasm. Its function is as follows. One of the essential components for the initiation of protein synthesis. Protects formylmethionyl-tRNA from spontaneous hydrolysis and promotes its binding to the 30S ribosomal subunits. Also involved in the hydrolysis of GTP during the formation of the 70S ribosomal complex. This Haemophilus influenzae (strain 86-028NP) protein is Translation initiation factor IF-2.